Consider the following 612-residue polypeptide: Cyclin-dependent kinase 8 (612 aa).

Positions 23 to 345 (FENSKEIGRG…CEEAMNDIYF (323 aa)) constitute a Protein kinase domain. ATP is bound by residues 29–37 (IGRGTYGLV) and Lys-57. The Proton acceptor role is filled by Asp-155. Low complexity-rich tracts occupy residues 403-455 (QQQM…MGQP), 472-483 (HQMMQQQHQSQH), 543-555 (PQPGPSGYYQQRP), 564-573 (QGYMNPQMGM), and 600-612 (NPQQQQQWQQYHR). Disordered regions lie at residues 403–483 (QQQM…QSQH) and 543–612 (PQPG…QYHR).

It belongs to the protein kinase superfamily. CMGC Ser/Thr protein kinase family. CDC2/CDKX subfamily. In terms of assembly, component of the Mediator complex. Mg(2+) is required as a cofactor.

It localises to the nucleus. It catalyses the reaction L-seryl-[protein] + ATP = O-phospho-L-seryl-[protein] + ADP + H(+). It carries out the reaction L-threonyl-[protein] + ATP = O-phospho-L-threonyl-[protein] + ADP + H(+). The catalysed reaction is [DNA-directed RNA polymerase] + ATP = phospho-[DNA-directed RNA polymerase] + ADP + H(+). In terms of biological role, component of the Mediator complex, a coactivator involved in regulated gene transcription of nearly all RNA polymerase II-dependent genes. Mediator functions as a bridge to convey information from gene-specific regulatory proteins to the basal RNA polymerase II transcription machinery. Mediator is recruited to promoters by direct interactions with regulatory proteins and serves as a scaffold for the assembly of a functional pre-initiation complex with RNA polymerase II and the general transcription factors. Phosphorylates the CTD (C-terminal domain) of the large subunit of RNA polymerase II (RNAp II), which may inhibit the formation of a transcription initiation complex. The sequence is that of Cyclin-dependent kinase 8 (cdk-8) from Caenorhabditis briggsae.